The following is a 134-amino-acid chain: Large ribosomal subunit protein bL20 (134 aa).

This sequence belongs to the bacterial ribosomal protein bL20 family.

Its function is as follows. Binds directly to 23S ribosomal RNA and is necessary for the in vitro assembly process of the 50S ribosomal subunit. It is not involved in the protein synthesizing functions of that subunit. This is Large ribosomal subunit protein bL20 from Brucella anthropi (strain ATCC 49188 / DSM 6882 / CCUG 24695 / JCM 21032 / LMG 3331 / NBRC 15819 / NCTC 12168 / Alc 37) (Ochrobactrum anthropi).